A 60-amino-acid polypeptide reads, in one-letter code: UPF0291 protein CTC_01690.1 (60 aa).

This sequence belongs to the UPF0291 family.

The protein localises to the cytoplasm. This chain is UPF0291 protein CTC_01690.1, found in Clostridium tetani (strain Massachusetts / E88).